We begin with the raw amino-acid sequence, 81 residues long: MGHIITYCQVHTNISILIRKAHHIIFFVIDCDCISLQFSNYVHHGNRFRTVLISKTSIACFSDIKRILPCTFKIYSINDCP.

This is an uncharacterized protein from Vaccinia virus (strain Copenhagen) (VACV).